The following is a 354-amino-acid chain: S-adenosylmethionine:tRNA ribosyltransferase-isomerase (354 aa).

It belongs to the QueA family. In terms of assembly, monomer.

It localises to the cytoplasm. The catalysed reaction is 7-aminomethyl-7-carbaguanosine(34) in tRNA + S-adenosyl-L-methionine = epoxyqueuosine(34) in tRNA + adenine + L-methionine + 2 H(+). It functions in the pathway tRNA modification; tRNA-queuosine biosynthesis. Its function is as follows. Transfers and isomerizes the ribose moiety from AdoMet to the 7-aminomethyl group of 7-deazaguanine (preQ1-tRNA) to give epoxyqueuosine (oQ-tRNA). The sequence is that of S-adenosylmethionine:tRNA ribosyltransferase-isomerase from Salmonella schwarzengrund (strain CVM19633).